Reading from the N-terminus, the 451-residue chain is Molybdate-anion transporter (451 aa).

Helical transmembrane passes span Met1–Phe21, Tyr45–Leu65, Ile79–Pro99, Phe130–Phe150, Asn180–Leu200, Gly201–Ile221, Val251–Leu271, Ala281–Tyr301, Val316–Ala336, Leu346–Leu366, Gly378–Leu398, and Met410–Thr430.

This sequence belongs to the major facilitator superfamily.

It is found in the cell membrane. Mediates high-affinity intracellular uptake of the rare oligo-element molybdenum. The sequence is that of Molybdate-anion transporter (mfsd5) from Xenopus laevis (African clawed frog).